An 837-amino-acid chain; its full sequence is Translation initiation factor IF-2 (837 aa).

Over residues 97-139 (AEEIEAEQRRELEEQRAAEEAARLKAEQEARERAEEEARRQAE) the composition is skewed to basic and acidic residues. A disordered region spans residues 97–253 (AEEIEAEQRR…QHGFQSPTGP (157 aa)). Residues 140–175 (AAKAQTAETAAPAAAESASSAEPAQVVAAVEAAAPA) are compositionally biased toward low complexity. Residues 176-197 (PERKKEEPRRVEKPRSDDDERR) show a composition bias toward basic and acidic residues. The segment covering 198 to 208 (DRKHAQHRPSL) has biased composition (basic residues). Residues 219–229 (RSGEDEADGFR) are compositionally biased toward basic and acidic residues. Over residues 230–244 (RGGRGGKSKLKKRNQ) the composition is skewed to basic residues. Positions 337-504 (ARAPVVTVMG…AVLLQAEILE (168 aa)) constitute a tr-type G domain. The segment at 346–353 (GHVDHGKT) is G1. 346-353 (GHVDHGKT) is a GTP binding site. The segment at 371–375 (GITQH) is G2. Residues 392–395 (DTPG) are G3. Residues 392–396 (DTPGH) and 446–449 (NKID) each bind GTP. The tract at residues 446 to 449 (NKID) is G4. Residues 482–484 (SAK) are G5.

Belongs to the TRAFAC class translation factor GTPase superfamily. Classic translation factor GTPase family. IF-2 subfamily.

The protein localises to the cytoplasm. In terms of biological role, one of the essential components for the initiation of protein synthesis. Protects formylmethionyl-tRNA from spontaneous hydrolysis and promotes its binding to the 30S ribosomal subunits. Also involved in the hydrolysis of GTP during the formation of the 70S ribosomal complex. This chain is Translation initiation factor IF-2, found in Stutzerimonas stutzeri (strain A1501) (Pseudomonas stutzeri).